We begin with the raw amino-acid sequence, 180 residues long: Ribulose bisphosphate carboxylase small subunit, chloroplastic 3 (180 aa).

The transit peptide at 1–56 directs the protein to the chloroplast; sequence MASSVMSSAAVATRGNGAQASMVAPFTGLKSTASFPVSRKQNLDITSIASNGGRVS.

Belongs to the RuBisCO small chain family. Heterohexadecamer of 8 large and 8 small subunits. In terms of assembly, (Microbial infection) Binds to tobamovirus movement protein; this interaction seems required for viral systemic movement.

It is found in the plastid. Its subcellular location is the chloroplast. The protein resides in the cell junction. The protein localises to the plasmodesma. In terms of biological role, ruBisCO catalyzes two reactions: the carboxylation of D-ribulose 1,5-bisphosphate, the primary event in carbon dioxide fixation, as well as the oxidative fragmentation of the pentose substrate. Both reactions occur simultaneously and in competition at the same active site. Although the small subunit is not catalytic it is essential for maximal activity. Involved in antiviral defenses. This chain is Ribulose bisphosphate carboxylase small subunit, chloroplastic 3, found in Solanum lycopersicum (Tomato).